The primary structure comprises 148 residues: UPF0756 membrane protein YeaL (148 aa).

4 consecutive transmembrane segments (helical) span residues 14-34 (ALGF…LIIV), 51-71 (LSIG…SGTL), 86-106 (LVAI…VTLM), and 121-141 (VLGV…AGLV).

Belongs to the UPF0756 family.

It localises to the cell membrane. The polypeptide is UPF0756 membrane protein YeaL (Shigella boydii serotype 18 (strain CDC 3083-94 / BS512)).